A 244-amino-acid chain; its full sequence is Transcriptional regulatory protein AruR (244 aa).

The 119-residue stretch at Arg6–Ile124 folds into the Response regulatory domain. Position 60 is a 4-aspartylphosphate (Asp60). The ompR/PhoB-type DNA-binding region spans Gln139–Ala239.

In terms of processing, phosphorylated by AruS.

It localises to the cytoplasm. It participates in amino-acid degradation; L-arginine degradation [regulation]. Functionally, member of the two-component regulatory system AruS/AruR, which is involved in the regulation of the arginine transaminase (ATA) pathway in response to exogeneous L-arginine. Regulates transcription of aruH and aruI. The chain is Transcriptional regulatory protein AruR (aruR) from Pseudomonas aeruginosa (strain ATCC 15692 / DSM 22644 / CIP 104116 / JCM 14847 / LMG 12228 / 1C / PRS 101 / PAO1).